Consider the following 170-residue polypeptide: NADH-quinone oxidoreductase subunit B (170 aa).

Positions 46, 47, 111, and 141 each coordinate [4Fe-4S] cluster.

It belongs to the complex I 20 kDa subunit family. In terms of assembly, NDH-1 is composed of 14 different subunits. Subunits NuoB, C, D, E, F, and G constitute the peripheral sector of the complex. The cofactor is [4Fe-4S] cluster.

It is found in the cell membrane. It carries out the reaction a quinone + NADH + 5 H(+)(in) = a quinol + NAD(+) + 4 H(+)(out). In terms of biological role, NDH-1 shuttles electrons from NADH, via FMN and iron-sulfur (Fe-S) centers, to quinones in the respiratory chain. The immediate electron acceptor for the enzyme in this species is believed to be a menaquinone. Couples the redox reaction to proton translocation (for every two electrons transferred, four hydrogen ions are translocated across the cytoplasmic membrane), and thus conserves the redox energy in a proton gradient. This Geobacillus sp. (strain WCH70) protein is NADH-quinone oxidoreductase subunit B.